A 388-amino-acid polypeptide reads, in one-letter code: MMSPSTSAPHNQPIQPELDVLLVSTVLLLLGLGLVMVYSASIAIAEAKFGEGSSYYFLARQASYILAGIAVGIGCFRIPLRWWQAYSHYLLGLGILLLLVVLIPGISHEINGSRRWIPLGITSFQPSELMKLIILIFTADYVVRKAAFKDHFFKGFLPILALLTIVSLLLLMEPDLGATVVIAAIVLSIMFMNGMSLKMFFGLICLVPVLLALLIIIEPYRMDRINAIFDPWNDPFDKGYQLTHALIAFGLGEWWGVGLGSSVEKLNYLPEAHTDFMFAVLAEELGFAGVVTVISLFFFLLVRIFKVGRTAARLGDQFGSLVAQGIGVWLGLQAFINMGVNMGLLPTKGLTLPFMSYGGSSIVINSIAIAILLRIDWENRLKRRGLNA.

Residues 1 to 19 are Cytoplasmic-facing; that stretch reads MMSPSTSAPHNQPIQPELD. The helical transmembrane segment at 20-40 threads the bilayer; sequence VLLVSTVLLLLGLGLVMVYSA. Residues 41-55 are Periplasmic-facing; the sequence is SIAIAEAKFGEGSSY. A helical membrane pass occupies residues 56–76; that stretch reads YFLARQASYILAGIAVGIGCF. The Cytoplasmic segment spans residues 77 to 89; it reads RIPLRWWQAYSHY. A helical transmembrane segment spans residues 90 to 110; it reads LLGLGILLLLVVLIPGISHEI. Over 111–116 the chain is Periplasmic; sequence NGSRRW. Residues 117 to 137 traverse the membrane as a helical segment; it reads IPLGITSFQPSELMKLIILIF. Residues 138-151 are Cytoplasmic-facing; the sequence is TADYVVRKAAFKDH. A helical membrane pass occupies residues 152–172; sequence FFKGFLPILALLTIVSLLLLM. Topologically, residues 173 to 175 are periplasmic; that stretch reads EPD. 2 helical membrane passes run 176–196 and 197–217; these read LGAT…NGMS and LKMF…LIII. The Periplasmic portion of the chain corresponds to 218 to 284; it reads EPYRMDRINA…DFMFAVLAEE (67 aa). The chain crosses the membrane as a helical span at residues 285 to 305; that stretch reads LGFAGVVTVISLFFFLLVRIF. Residues 306-324 are Cytoplasmic-facing; the sequence is KVGRTAARLGDQFGSLVAQ. The helical transmembrane segment at 325–345 threads the bilayer; that stretch reads GIGVWLGLQAFINMGVNMGLL. Residues 346 to 351 lie on the Periplasmic side of the membrane; it reads PTKGLT. The helical transmembrane segment at 352-372 threads the bilayer; that stretch reads LPFMSYGGSSIVINSIAIAIL. Over 373-388 the chain is Cytoplasmic; sequence LRIDWENRLKRRGLNA.

Belongs to the SEDS family. FtsW subfamily.

It localises to the cell inner membrane. The catalysed reaction is [GlcNAc-(1-&gt;4)-Mur2Ac(oyl-L-Ala-gamma-D-Glu-L-Lys-D-Ala-D-Ala)](n)-di-trans,octa-cis-undecaprenyl diphosphate + beta-D-GlcNAc-(1-&gt;4)-Mur2Ac(oyl-L-Ala-gamma-D-Glu-L-Lys-D-Ala-D-Ala)-di-trans,octa-cis-undecaprenyl diphosphate = [GlcNAc-(1-&gt;4)-Mur2Ac(oyl-L-Ala-gamma-D-Glu-L-Lys-D-Ala-D-Ala)](n+1)-di-trans,octa-cis-undecaprenyl diphosphate + di-trans,octa-cis-undecaprenyl diphosphate + H(+). Its pathway is cell wall biogenesis; peptidoglycan biosynthesis. Peptidoglycan polymerase that is essential for cell division. The polypeptide is Probable peptidoglycan glycosyltransferase FtsW (Nitrosomonas europaea (strain ATCC 19718 / CIP 103999 / KCTC 2705 / NBRC 14298)).